The following is a 323-amino-acid chain: MIDFGNFYSLIAKNHLSHWLETLPAQIANWQREQQHGLFKQWSNAVEFLPEIKPYRLDLLHSVTAESEEPLSAGQIKRIETLMRNLMPWRKGPFSLYGVNIDTEWRSDWKWDRVLPHLSDLTGRTILDVGCGSGYHMWRMIGAGAHLAVGIDPTQLFLCQFEAVRKLLGNDQRAHLLPLGIEQLPALKAFDTVFSMGVLYHRRSPLEHLWQLKDQLVNEGELVLETLVIDGDENTVLVPGDRYAQMRNVYFIPSALALKNWLKKCGFVDIRIADVSVTTTEEQRRTEWMVTESLADFLDSHDPGKTVEGYPAPKRAVLITRKP.

Carboxy-S-adenosyl-L-methionine contacts are provided by residues Lys-91, Trp-105, Lys-110, Gly-130, 152-154 (DPT), 181-182 (IE), Met-196, Tyr-200, and Arg-315.

Belongs to the class I-like SAM-binding methyltransferase superfamily. CmoB family. Homotetramer.

The catalysed reaction is carboxy-S-adenosyl-L-methionine + 5-hydroxyuridine(34) in tRNA = 5-carboxymethoxyuridine(34) in tRNA + S-adenosyl-L-homocysteine + H(+). In terms of biological role, catalyzes carboxymethyl transfer from carboxy-S-adenosyl-L-methionine (Cx-SAM) to 5-hydroxyuridine (ho5U) to form 5-carboxymethoxyuridine (cmo5U) at position 34 in tRNAs. The sequence is that of tRNA U34 carboxymethyltransferase from Shigella dysenteriae serotype 1 (strain Sd197).